Here is a 202-residue protein sequence, read N- to C-terminus: Transmembrane 4 L6 family member 1 (202 aa).

Residues 1–9 lie on the Cytoplasmic side of the membrane; that stretch reads MCYVKCARY. A helical membrane pass occupies residues 10–30; sequence IGYSLVWAAVFCIVANALLYF. Residues 31–49 are Extracellular-facing; it reads PNGETKYATEDHLSRFVWY. The chain crosses the membrane as a helical span at residues 50–70; sequence FAGIVGGGLLMLLPAFVFIGM. Residues 71-93 lie on the Cytoplasmic side of the membrane; the sequence is DEEDCCGCCGYENYGKRCSMLSS. A helical membrane pass occupies residues 94–114; that stretch reads VLAALIGIVGSAYCVIVASLG. The Extracellular segment spans residues 115-161; that stretch reads LAEGPKCSDAHGVWNYTFASTEGQYLLNSSMWSKCYEPKHIVEWHVT. 2 N-linked (GlcNAc...) asparagine glycosylation sites follow: asparagine 129 and asparagine 142. A helical membrane pass occupies residues 162–182; it reads LFSILLAFAAVEFILCLIQVI. Residues 183-202 lie on the Cytoplasmic side of the membrane; sequence NGMLGGLCGYCCSRQQQYNC.

It belongs to the L6 tetraspanin family. Present in high molecular weight complexes in tumor cells. Interacts with SDCBP2. In terms of tissue distribution, highly expressed in skin and lung. Moderately expressed in lymph nodes and kidneys. Also present in thymic stroma and fibroblasts.

It is found in the membrane. This Mus musculus (Mouse) protein is Transmembrane 4 L6 family member 1 (Tm4sf1).